The following is a 447-amino-acid chain: Eukaryotic translation initiation factor 3 subunit E (447 aa).

Positions 253–421 constitute a PCI domain; sequence LELFFNAGYI…GTVVMNHPPS (169 aa).

The protein belongs to the eIF-3 subunit E family. As to quaternary structure, component of the eukaryotic translation initiation factor 3 (eIF-3) complex.

It is found in the cytoplasm. Functionally, component of the eukaryotic translation initiation factor 3 (eIF-3) complex, which is involved in protein synthesis of a specialized repertoire of mRNAs and, together with other initiation factors, stimulates binding of mRNA and methionyl-tRNAi to the 40S ribosome. The eIF-3 complex specifically targets and initiates translation of a subset of mRNAs involved in cell proliferation. This chain is Eukaryotic translation initiation factor 3 subunit E, found in Chaetomium globosum (strain ATCC 6205 / CBS 148.51 / DSM 1962 / NBRC 6347 / NRRL 1970) (Soil fungus).